Reading from the N-terminus, the 303-residue chain is Polyisoprenyl-teichoic acid--peptidoglycan teichoic acid transferase TagU (303 aa).

The Cytoplasmic portion of the chain corresponds to 1-6 (MSKGKK). A helical; Signal-anchor for type II membrane protein membrane pass occupies residues 7-27 (IFAIIFGIILVLFLAVVGMGA). The Extracellular segment spans residues 28-303 (KLYWDVSKSM…QELKNQLNTK (276 aa)).

Belongs to the LytR/CpsA/Psr (LCP) family.

Its subcellular location is the cell membrane. It functions in the pathway cell wall biogenesis. Its function is as follows. May catalyze the final step in cell wall teichoic acid biosynthesis, the transfer of the anionic cell wall polymers (APs) from their lipid-linked precursor to the cell wall peptidoglycan (PG). In Enterococcus faecalis (strain ATCC 700802 / V583), this protein is Polyisoprenyl-teichoic acid--peptidoglycan teichoic acid transferase TagU.